Here is a 424-residue protein sequence, read N- to C-terminus: GTPase Obg (424 aa).

The Obg domain maps to 1 to 160; the sequence is MFDRVEINIK…YDLILELKLI (160 aa). An OBG-type G domain is found at 161–328; that stretch reads ADVAIIGYPN…LLAKVAEKLD (168 aa). GTP contacts are provided by residues 167-174, 192-196, 213-216, 280-283, and 309-311; these read GYPNVGKS, FTTLS, EVPG, NKID, and SAL. Mg(2+)-binding residues include serine 174 and threonine 194. In terms of domain architecture, OCT spans 349–424; sequence PAPKGKMGFR…IITGRMEWYL (76 aa).

The protein belongs to the TRAFAC class OBG-HflX-like GTPase superfamily. OBG GTPase family. Monomer. The cofactor is Mg(2+).

It is found in the cytoplasm. Functionally, an essential GTPase which binds GTP, GDP and possibly (p)ppGpp with moderate affinity, with high nucleotide exchange rates and a fairly low GTP hydrolysis rate. Plays a role in control of the cell cycle, stress response, ribosome biogenesis and in those bacteria that undergo differentiation, in morphogenesis control. The sequence is that of GTPase Obg from Dehalococcoides mccartyi (strain ATCC BAA-2100 / JCM 16839 / KCTC 5957 / BAV1).